Here is a 403-residue protein sequence, read N- to C-terminus: Homoserine O-succinyltransferase (403 aa).

Residues 58–366 (NAVLICHALS…ESNHGHDAFL (309 aa)) form the AB hydrolase-1 domain. Residue serine 164 is the Nucleophile of the active site. Arginine 234 provides a ligand contact to substrate. Residues aspartate 329 and histidine 362 contribute to the active site. A substrate-binding site is contributed by aspartate 363.

The protein belongs to the AB hydrolase superfamily. MetX family. Homodimer.

It localises to the cytoplasm. The catalysed reaction is L-homoserine + succinyl-CoA = O-succinyl-L-homoserine + CoA. It participates in amino-acid biosynthesis; L-methionine biosynthesis via de novo pathway; O-succinyl-L-homoserine from L-homoserine: step 1/1. Transfers a succinyl group from succinyl-CoA to L-homoserine, forming succinyl-L-homoserine. The sequence is that of Homoserine O-succinyltransferase from Halothiobacillus neapolitanus (strain ATCC 23641 / c2) (Thiobacillus neapolitanus).